A 243-amino-acid polypeptide reads, in one-letter code: 4-hydroxy-tetrahydrodipicolinate reductase (243 aa).

NAD(+)-binding positions include 9–14 (GANGKM), 78–80 (GTS), and 104–107 (APNF). H134 functions as the Proton donor/acceptor in the catalytic mechanism. (S)-2,3,4,5-tetrahydrodipicolinate is bound at residue H135. K138 serves as the catalytic Proton donor. (S)-2,3,4,5-tetrahydrodipicolinate is bound at residue 144–145 (GT).

It belongs to the DapB family.

It localises to the cytoplasm. It carries out the reaction (S)-2,3,4,5-tetrahydrodipicolinate + NAD(+) + H2O = (2S,4S)-4-hydroxy-2,3,4,5-tetrahydrodipicolinate + NADH + H(+). The catalysed reaction is (S)-2,3,4,5-tetrahydrodipicolinate + NADP(+) + H2O = (2S,4S)-4-hydroxy-2,3,4,5-tetrahydrodipicolinate + NADPH + H(+). Its pathway is amino-acid biosynthesis; L-lysine biosynthesis via DAP pathway; (S)-tetrahydrodipicolinate from L-aspartate: step 4/4. Catalyzes the conversion of 4-hydroxy-tetrahydrodipicolinate (HTPA) to tetrahydrodipicolinate. The sequence is that of 4-hydroxy-tetrahydrodipicolinate reductase from Legionella pneumophila subsp. pneumophila (strain Philadelphia 1 / ATCC 33152 / DSM 7513).